Consider the following 62-residue polypeptide: MGMRMMFTVFLLVVLATTVVSFTLDRASDGASAAADLVARGIRGNCCMFHTCPIDYSRFNCP.

Residues 1–21 (MGMRMMFTVFLLVVLATTVVS) form the signal peptide. The propeptide occupies 22–40 (FTLDRASDGASAAADLVAR). 2 disulfide bridges follow: Cys46-Cys52 and Cys47-Cys61.

Belongs to the conotoxin A superfamily. Expressed by the venom duct.

The protein resides in the secreted. Functionally, the short (45-61) amidated synthetic peptide inhibits the rat neuronal alpha-3-beta-2/CHRNA3-CHRNB2 nicotinic acetylcholine receptor (nAChR) (IC(50)=1.16 uM). It also inhibits Cav2.2/CACNA1C voltage-gated calcium channel (IC(50)=398 nM). In vivo, when tested in rat pain models, this short amidated peptide increases the pain threshold. The sequence is that of Alpha-conotoxin Vt1.27 from Conus planorbis (Planorbis cone).